Here is a 314-residue protein sequence, read N- to C-terminus: DNA-directed RNA polymerase subunit alpha (314 aa).

The tract at residues 1-228 (MIEIEKPRIE…EHLNIFVSLT (228 aa)) is alpha N-terminal domain (alpha-NTD). The tract at residues 245-314 (KEKVLEMSIE…DLGLGLRKED (70 aa)) is alpha C-terminal domain (alpha-CTD).

The protein belongs to the RNA polymerase alpha chain family. As to quaternary structure, homodimer. The RNAP catalytic core consists of 2 alpha, 1 beta, 1 beta' and 1 omega subunit. When a sigma factor is associated with the core the holoenzyme is formed, which can initiate transcription.

It carries out the reaction RNA(n) + a ribonucleoside 5'-triphosphate = RNA(n+1) + diphosphate. Functionally, DNA-dependent RNA polymerase catalyzes the transcription of DNA into RNA using the four ribonucleoside triphosphates as substrates. This Staphylococcus epidermidis (strain ATCC 35984 / DSM 28319 / BCRC 17069 / CCUG 31568 / BM 3577 / RP62A) protein is DNA-directed RNA polymerase subunit alpha.